A 98-amino-acid polypeptide reads, in one-letter code: Alpha-elicitin DRE-alpha (98 aa).

Cystine bridges form between Cys3/Cys71, Cys27/Cys56, and Cys51/Cys95.

Belongs to the elicitin family.

The protein localises to the secreted. In terms of biological role, induces local and distal defense responses (incompatible hypersensitive reaction) in plants from the solanaceae and cruciferae families. Elicits leaf necrosis and causes the accumulation of pathogenesis-related proteins. Might interact with the lipidic molecules of the plasma membrane. In Phytophthora drechsleri, this protein is Alpha-elicitin DRE-alpha.